The sequence spans 624 residues: Chaperone protein HtpG (624 aa).

Positions 1 to 336 (MKGQETRGFQ…SNDLPLNVSR (336 aa)) are a; substrate-binding. A b region spans residues 337 to 552 (EILQDSTVTR…ADEMSTQMAK (216 aa)). Positions 553-624 (LFAAAGQAVP…IRRMNQLLVS (72 aa)) are c.

Belongs to the heat shock protein 90 family. In terms of assembly, homodimer.

The protein resides in the cytoplasm. Molecular chaperone. Has ATPase activity. In Citrobacter koseri (strain ATCC BAA-895 / CDC 4225-83 / SGSC4696), this protein is Chaperone protein HtpG.